Reading from the N-terminus, the 1077-residue chain is Serine/threonine-protein kinase sel-5 (1077 aa).

Residues 47–317 (VTIEKQIAEG…IYQTSVLAFE (271 aa)) enclose the Protein kinase domain. Residues 53–61 (IAEGGFAIV) and lysine 75 contribute to the ATP site. The Proton acceptor role is filled by aspartate 178. Disordered stretches follow at residues 347-444 (MRDG…TDGS), 488-554 (GFTD…SQVV), 616-813 (ELDS…TNPF), and 920-1077 (LISV…PTDL). The segment covering 369 to 399 (IQSSSKMASLSQQVPSISNISMPSGSGTVET) has biased composition (polar residues). Residues 491-515 (DLDKPALPRDRAQTDGKRRLPHESD) show a composition bias toward basic and acidic residues. Residues 541 to 554 (SSQQTTSKTSSQVV) show a composition bias toward low complexity. The span at 638 to 648 (LTVSTSSSAQP) shows a compositional bias: polar residues. The span at 655 to 679 (TDEDDERQLLSETDEEEKYEIDEKE) shows a compositional bias: acidic residues. Composition is skewed to basic and acidic residues over residues 697–708 (DEQRMNDRRRYS) and 739–751 (DSRR…HDED). A compositionally biased stretch (acidic residues) spans 770 to 780 (EDDGLEDDDDH). Residues 799–810 (GTSTPHTQNPIT) show a composition bias toward polar residues. A compositionally biased stretch (pro residues) spans 927-936 (TDPPPPPLPK). A compositionally biased stretch (polar residues) spans 941-950 (ASPTQETTAT). The span at 960 to 969 (KLLKKEKKKE) shows a compositional bias: basic residues. Over residues 970–989 (KKDGKKDKLKLEEYREKGSS) the composition is skewed to basic and acidic residues. The span at 1054 to 1067 (LTGKNASFVNTSFQ) shows a compositional bias: polar residues.

Belongs to the protein kinase superfamily. Ser/Thr protein kinase family. It depends on Mg(2+) as a cofactor.

It is found in the cytoplasm. It catalyses the reaction L-seryl-[protein] + ATP = O-phospho-L-seryl-[protein] + ADP + H(+). It carries out the reaction L-threonyl-[protein] + ATP = O-phospho-L-threonyl-[protein] + ADP + H(+). Serine/threonine-protein kinase which may play a role in lin-12-mediated cell-fate decisions. The polypeptide is Serine/threonine-protein kinase sel-5 (Caenorhabditis elegans).